The chain runs to 594 residues: UvrABC system protein C (594 aa).

A GIY-YIG domain is found at 14–91 (DQPGCYLMKD…IKKHDPKYNI (78 aa)). The region spanning 196–231 (KEVRSELETKMYEASEKLEFERAKELRDQIAHIDAI) is the UVR domain.

The protein belongs to the UvrC family. As to quaternary structure, interacts with UvrB in an incision complex.

The protein localises to the cytoplasm. Functionally, the UvrABC repair system catalyzes the recognition and processing of DNA lesions. UvrC both incises the 5' and 3' sides of the lesion. The N-terminal half is responsible for the 3' incision and the C-terminal half is responsible for the 5' incision. This is UvrABC system protein C from Bacillus cereus (strain AH187).